A 399-amino-acid chain; its full sequence is Elongation factor Tu (399 aa).

The region spanning 10 to 204 (KPHVNIGTIG…AVDASIPEPE (195 aa)) is the tr-type G domain. Residues 19 to 26 (GHVDHGKT) form a G1 region. 19 to 26 (GHVDHGKT) is a binding site for GTP. Residue Thr-26 coordinates Mg(2+). The G2 stretch occupies residues 60–64 (GITIN). Residues 81–84 (DCPG) form a G3 region. GTP is bound by residues 81-85 (DCPGH) and 136-139 (NKCD). The segment at 136–139 (NKCD) is G4. Positions 174 to 176 (SGL) are G5.

It belongs to the TRAFAC class translation factor GTPase superfamily. Classic translation factor GTPase family. EF-Tu/EF-1A subfamily. As to quaternary structure, monomer.

The protein resides in the cytoplasm. The catalysed reaction is GTP + H2O = GDP + phosphate + H(+). Functionally, GTP hydrolase that promotes the GTP-dependent binding of aminoacyl-tRNA to the A-site of ribosomes during protein biosynthesis. This chain is Elongation factor Tu, found in Prochlorococcus marinus (strain NATL1A).